Here is an 892-residue protein sequence, read N- to C-terminus: Alanine--tRNA ligase (892 aa).

Positions 577, 581, 680, and 684 each coordinate Zn(2+).

The protein belongs to the class-II aminoacyl-tRNA synthetase family. Requires Zn(2+) as cofactor.

Its subcellular location is the cytoplasm. The catalysed reaction is tRNA(Ala) + L-alanine + ATP = L-alanyl-tRNA(Ala) + AMP + diphosphate. Functionally, catalyzes the attachment of alanine to tRNA(Ala) in a two-step reaction: alanine is first activated by ATP to form Ala-AMP and then transferred to the acceptor end of tRNA(Ala). Also edits incorrectly charged Ser-tRNA(Ala) and Gly-tRNA(Ala) via its editing domain. The polypeptide is Alanine--tRNA ligase (Paenarthrobacter aurescens (strain TC1)).